We begin with the raw amino-acid sequence, 209 residues long: Uracil phosphoribosyltransferase (209 aa).

5-phospho-alpha-D-ribose 1-diphosphate is bound by residues Arg-79, Arg-104, and Asp-131–Ser-139. Residues Ile-194 and Gly-199 to Ala-201 each bind uracil. 5-phospho-alpha-D-ribose 1-diphosphate is bound at residue Asp-200.

The protein belongs to the UPRTase family. The cofactor is Mg(2+).

It catalyses the reaction UMP + diphosphate = 5-phospho-alpha-D-ribose 1-diphosphate + uracil. It participates in pyrimidine metabolism; UMP biosynthesis via salvage pathway; UMP from uracil: step 1/1. Its activity is regulated as follows. Allosterically activated by GTP. Catalyzes the conversion of uracil and 5-phospho-alpha-D-ribose 1-diphosphate (PRPP) to UMP and diphosphate. The sequence is that of Uracil phosphoribosyltransferase from Bacillus pumilus (strain SAFR-032).